The following is a 307-amino-acid chain: Mitochondrial brown fat uncoupling protein 1 (307 aa).

The Mitochondrial intermembrane segment spans residues 1–10 (MVSSTTSEVQ). The helical transmembrane segment at 11-32 (PTMGVKIFSAGVSACLADIITF) threads the bilayer. Solcar repeat units lie at residues 11–102 (PTMG…VQEY), 111–201 (ASLG…MKGA), and 210–295 (DDVP…LKKE). Residues 33 to 73 (PLDTAKVRLQIQGEGQASSTIRYKGVLGTITTLAKTEGLPK) are Mitochondrial matrix-facing. Lysine 56 lines the fatty acid 16:0 pocket. The chain crosses the membrane as a helical span at residues 74-96 (LYSGLPAGIQRQISFASLRIGLY). Over 97 to 116 (DTVQEYFSSGRETPASLGSK) the chain is Mitochondrial intermembrane. A helical transmembrane segment spans residues 117–133 (ISAGLMTGGVAVFIGQP). Residues 134 to 178 (TEVVKVRMQAQSHLHGIKPRYTGTYNAYRVIATTESLSTLWKGTT) lie on the Mitochondrial matrix side of the membrane. The chain crosses the membrane as a helical span at residues 179–195 (PNLMRNVIINCTELVTY). Over 196 to 212 (DLMKGALVNHHILADDV) the chain is Mitochondrial intermembrane. The chain crosses the membrane as a helical span at residues 213-232 (PCHLLSALVAGFCTTLLASP). Residues 233–266 (VDVVKTRFINSLPGQYPSVPSCAMTMYTKEGPAA) are Mitochondrial matrix-facing. The residue at position 254 (cysteine 254) is a Cysteine sulfenic acid (-SOH). A helical transmembrane segment spans residues 267–289 (FFKGFAPSFLRLGSWNVIMFVCF). Lysine 269 contributes to the fatty acid 16:0 binding site. Over 290 to 307 (EQLKKELMKSRQTVDCTT) the chain is Mitochondrial intermembrane.

The protein belongs to the mitochondrial carrier (TC 2.A.29) family. In terms of assembly, most probably functions as a monomer. Binds one purine nucleotide per monomer. However, has also been suggested to function as a homodimer or a homotetramer. Tightly associates with cardiolipin in the mitochondrion inner membrane; may stabilize and regulate its activity. May undergo ubiquitin-mediated proteasomal degradation. Post-translationally, may undergo sulfenylation upon cold exposure. May increase the sensitivity of UCP1 thermogenic function to the activation by noradrenaline probably through structural effects. In terms of tissue distribution, brown adipose tissue.

The protein localises to the mitochondrion inner membrane. The catalysed reaction is H(+)(in) = H(+)(out). Has no constitutive proton transporter activity and has to be activated by long-chain fatty acids/LCFAs. Inhibited by purine nucleotides. Both purine nucleotides and LCFAs bind the cytosolic side of the transporter and directly compete to activate or inhibit it. Activated by noradrenaline and reactive oxygen species. Despite lacking canonical translational encoding for selenocysteine, a small pool of the protein has been observed to selectively incorporate selenocysteine at 'Cys-254'. Selenocysteine-modified protein is highly sensitive to redox modification and may constitute a pool of protein highly sensitive to activation by elevated levels of reactive oxygen species (ROS). Mitochondrial protein responsible for thermogenic respiration, a specialized capacity of brown adipose tissue and beige fat that participates in non-shivering adaptive thermogenesis to temperature and diet variations and more generally to the regulation of energy balance. Functions as a long-chain fatty acid/LCFA and proton symporter, simultaneously transporting one LCFA and one proton through the inner mitochondrial membrane. However, LCFAs remaining associated with the transporter via their hydrophobic tails, it results in an apparent transport of protons activated by LCFAs. Thereby, dissipates the mitochondrial proton gradient and converts the energy of substrate oxydation into heat instead of ATP. Regulates the production of reactive oxygen species/ROS by mitochondria. This Rattus norvegicus (Rat) protein is Mitochondrial brown fat uncoupling protein 1.